The following is a 301-amino-acid chain: Helicase VP6-A (301 aa).

Disordered regions lie at residues 1–99 (MIDW…TTGT) and 163–208 (RRKE…TSVG). Composition is skewed to basic and acidic residues over residues 8-30 (ESGKGDKVEPKEENEAEESKDGE), 37-55 (GQKKESSKEAEDADVDRRV), and 67-81 (GFRERANENVDRGDG). An ATP-binding site is contributed by Lys82. Basic and acidic residues-rich tracts occupy residues 163-177 (RRKEKSETHARVAEK) and 186-202 (VHGDAQKESTEDEKTPE).

The protein belongs to the orbivirus VP6 family. In terms of assembly, homohexamer.

It localises to the virion. The catalysed reaction is ATP + H2O = ADP + phosphate + H(+). ATP dependent RNA helicase essential for RNA packaging and viral transcription. Possesses ss- and dsRNA-binding capacity. This Bluetongue virus 2 (isolate USA) (BTV 2) protein is Helicase VP6-A (Segment-9).